Here is a 406-residue protein sequence, read N- to C-terminus: S-adenosylmethionine synthase (406 aa).

141–146 contacts ATP; the sequence is GQGSMD.

This sequence belongs to the AdoMet synthase 2 family. As to quaternary structure, homodimer. It depends on Mg(2+) as a cofactor.

The catalysed reaction is L-methionine + ATP + H2O = S-adenosyl-L-methionine + phosphate + diphosphate. It functions in the pathway amino-acid biosynthesis; S-adenosyl-L-methionine biosynthesis; S-adenosyl-L-methionine from L-methionine: step 1/1. In terms of biological role, catalyzes the formation of S-adenosylmethionine from methionine and ATP. The sequence is that of S-adenosylmethionine synthase (mat) from Methanocaldococcus jannaschii (strain ATCC 43067 / DSM 2661 / JAL-1 / JCM 10045 / NBRC 100440) (Methanococcus jannaschii).